A 349-amino-acid chain; its full sequence is Aquaporin-4 (349 aa).

Transmembrane regions (helical) follow at residues L92–A112 and A125–L147. The NPA 1 motif lies at N148–A150. A helical membrane pass occupies residues L167–I187. Residues N194 and N207 are each glycosylated (N-linked (GlcNAc...) asparagine). The next 2 membrane-spanning stretches (helical) occupy residues G225–C245 and M256–A276. An NPA 2 motif is present at residues N281–A283. A helical membrane pass occupies residues W314–I334.

This sequence belongs to the MIP/aquaporin (TC 1.A.8) family.

Its subcellular location is the cell membrane. Its function is as follows. Aquaglyceroporin that may modulate the water content and osmolytes during anhydrobiosis. This Milnesium tardigradum (Water bear) protein is Aquaporin-4.